Consider the following 123-residue polypeptide: Transmembrane protein 254 (123 aa).

Residue alanine 2 is modified to N-acetylalanine. 3 consecutive transmembrane segments (helical) span residues 15-35, 61-81, and 95-115; these read LFWF…VFWP, LCNG…YAIV, and LLWF…LIAY.

It is found in the membrane. The polypeptide is Transmembrane protein 254 (TMEM254) (Pongo abelii (Sumatran orangutan)).